The primary structure comprises 355 residues: Replication-associated protein (355 aa).

A CRESS-DNA virus Rep endonuclease domain is found at 11-114; the sequence is SHRNVNTFLT…PLAVFERGTF (104 aa). The RCR-1 signature appears at 18 to 21; the sequence is FLTY. 3 residues coordinate a divalent metal cation: Glu52, His60, and His62. The RCR-2 signature appears at 60–62; that stretch reads HLH. The active-site For DNA cleavage activity is the Tyr100. The short motif at 100–103 is the RCR-3 element; it reads YILK. Glu104 is an a divalent metal cation binding site. Over residues 119–128 the composition is skewed to polar residues; that stretch reads SSFQGNPSKG. The disordered stretch occupies residues 119 to 138; that stretch reads SSFQGNPSKGNSEKKPSKDE. Basic and acidic residues predominate over residues 129 to 138; that stretch reads NSEKKPSKDE. Residues 175 to 187 are oligomerization; that stretch reads SANKLFPEIQEEF. Position 229 to 236 (229 to 236) interacts with ATP; it reads GPTRTGKS. Positions 252–270 are transactivation; that stretch reads VDWSSYNEDAIYNIVDDIP. The Nuclear localization signal motif lies at 292 to 303; the sequence is KYGKKKKVQMKS.

Belongs to the geminiviridae Rep protein family. As to quaternary structure, homooligomer. Rep binds to repeated DNA motifs (iterons). Forms the O-complex, which is a Rep-DNA complex involved in the initiation of RCR. Part of the C- and V-complexes which are RepA-Rep-DNA complexes involved in the c-sense and v-sense transcription. Mg(2+) is required as a cofactor. It depends on Mn(2+) as a cofactor.

It is found in the host nucleus. Its function is as follows. Essential for the replication of viral ssDNA. The closed circular ssDNA genome is first converted to a superhelical dsDNA. Rep binds a specific region at the genome origin of replication. It introduces an endonucleolytic nick within the conserved sequence 5'-TAATATTAC-3' in the intergenic region of the genome present in all geminiviruses, thereby initiating the rolling circle replication (RCR). Following cleavage, binds covalently to the 5'-phosphate of DNA as a tyrosyl ester. The cleavage gives rise to a free 3'-OH that serves as a primer for the cellular DNA polymerase. The polymerase synthesizes the (+) strand DNA by rolling circle mechanism. After one round of replication, a Rep-catalyzed nucleotidyl transfer reaction releases a circular single-stranded virus genome, thereby terminating the replication. Displays origin-specific DNA cleavage, nucleotidyl transferase, ATPase and helicase activities. Acts as an inhibitor of C-sense gene transcription. The protein is Replication-associated protein of Maize streak virus genotype B (isolate Tas) (MSV).